The following is a 375-amino-acid chain: 2-methylcitrate synthase (375 aa).

Residues Lys-72 and His-187 each coordinate substrate. His-222 is an active-site residue. CoA is bound at residue 255–259; sequence KIMGF. His-261 is an active-site residue. Residue Arg-270 participates in substrate binding. The active site involves Asp-312. Substrate contacts are provided by Arg-337 and Arg-356.

The protein belongs to the citrate synthase family. As to quaternary structure, homodimer.

The enzyme catalyses propanoyl-CoA + oxaloacetate + H2O = (2S,3S)-2-methylcitrate + CoA + H(+). The catalysed reaction is oxaloacetate + acetyl-CoA + H2O = citrate + CoA + H(+). It participates in organic acid metabolism; propanoate degradation. The protein operates within carbohydrate metabolism; tricarboxylic acid cycle; isocitrate from oxaloacetate: step 1/2. Involved in the catabolism of short chain fatty acids (SCFA) via the tricarboxylic acid (TCA)(acetyl degradation route) and via the 2-methylcitrate cycle II (propionate degradation route). Catalyzes the Claisen condensation of propionyl-CoA and oxaloacetate (OAA) to yield 2-methylcitrate (2-MC) and CoA. Catalyzes the condensation of oxaloacetate with acetyl-CoA. This is 2-methylcitrate synthase (prpC) from Shewanella oneidensis (strain ATCC 700550 / JCM 31522 / CIP 106686 / LMG 19005 / NCIMB 14063 / MR-1).